Here is a 534-residue protein sequence, read N- to C-terminus: uncharacterized protein (534 aa).

This is an uncharacterized protein from Escherichia coli (strain K12).